We begin with the raw amino-acid sequence, 314 residues long: Acetyl-coenzyme A carboxylase carboxyl transferase subunit beta (314 aa).

The CoA carboxyltransferase N-terminal domain maps to 37–307 (LWQKCPACDA…MSLPALEPTY (271 aa)). Zn(2+) contacts are provided by Cys-41, Cys-44, Cys-60, and Cys-63. A C4-type zinc finger spans residues 41 to 63 (CPACDALTYTKDLQQNWQVCPSC).

This sequence belongs to the AccD/PCCB family. Acetyl-CoA carboxylase is a heterohexamer composed of biotin carboxyl carrier protein (AccB), biotin carboxylase (AccC) and two subunits each of ACCase subunit alpha (AccA) and ACCase subunit beta (AccD). The cofactor is Zn(2+).

It localises to the cytoplasm. It carries out the reaction N(6)-carboxybiotinyl-L-lysyl-[protein] + acetyl-CoA = N(6)-biotinyl-L-lysyl-[protein] + malonyl-CoA. The protein operates within lipid metabolism; malonyl-CoA biosynthesis; malonyl-CoA from acetyl-CoA: step 1/1. Its function is as follows. Component of the acetyl coenzyme A carboxylase (ACC) complex. Biotin carboxylase (BC) catalyzes the carboxylation of biotin on its carrier protein (BCCP) and then the CO(2) group is transferred by the transcarboxylase to acetyl-CoA to form malonyl-CoA. This is Acetyl-coenzyme A carboxylase carboxyl transferase subunit beta from Synechococcus sp. (strain JA-3-3Ab) (Cyanobacteria bacterium Yellowstone A-Prime).